The chain runs to 275 residues: Sulfur carrier protein FdhD (275 aa).

The active-site Cysteine persulfide intermediate is Cys121. 258–263 (FSKPGR) serves as a coordination point for Mo-bis(molybdopterin guanine dinucleotide).

It belongs to the FdhD family.

It localises to the cytoplasm. Functionally, required for formate dehydrogenase (FDH) activity. Acts as a sulfur carrier protein that transfers sulfur from IscS to the molybdenum cofactor prior to its insertion into FDH. This Yersinia enterocolitica serotype O:8 / biotype 1B (strain NCTC 13174 / 8081) protein is Sulfur carrier protein FdhD.